We begin with the raw amino-acid sequence, 554 residues long: Phosphomannomutase (554 aa).

Ser-149 serves as the catalytic Phosphoserine intermediate. Positions 149, 301, 303, and 305 each coordinate Mg(2+).

This sequence belongs to the phosphohexose mutase family. It depends on Mg(2+) as a cofactor.

It catalyses the reaction alpha-D-mannose 1-phosphate = D-mannose 6-phosphate. In Mycoplasma pneumoniae (strain ATCC 29342 / M129 / Subtype 1) (Mycoplasmoides pneumoniae), this protein is Phosphomannomutase (manB).